The chain runs to 216 residues: Adenylate kinase (216 aa).

10–15 serves as a coordination point for ATP; it reads GAGKGT. The NMP stretch occupies residues 30–59; the sequence is STGDIFRKNIKEGTELGKKAKEYMDQGLLV. Residues Thr-31, Arg-36, 57–59, 85–88, and Gln-92 each bind AMP; these read LLV and GFPR. Residues 126-163 are LID; sequence GRRICKSCGATYHVEFNPPKVEGVCDVCQGELYQRADD. Arg-127 serves as a coordination point for ATP. Residues Cys-130 and Cys-133 each contribute to the Zn(2+) site. 136–137 is a binding site for ATP; it reads TY. 2 residues coordinate Zn(2+): Cys-150 and Cys-153. Residues Arg-160 and Arg-171 each contribute to the AMP site. Gln-199 provides a ligand contact to ATP.

Belongs to the adenylate kinase family. As to quaternary structure, monomer.

It localises to the cytoplasm. The catalysed reaction is AMP + ATP = 2 ADP. The protein operates within purine metabolism; AMP biosynthesis via salvage pathway; AMP from ADP: step 1/1. Catalyzes the reversible transfer of the terminal phosphate group between ATP and AMP. Plays an important role in cellular energy homeostasis and in adenine nucleotide metabolism. The protein is Adenylate kinase of Clostridioides difficile (strain 630) (Peptoclostridium difficile).